The sequence spans 421 residues: Mannose-1-phosphate guanylyltransferase regulatory subunit alpha (421 aa).

The segment at 2 to 252 is substrate-binding domain; the sequence is LKAVILIGGP…EGCWSQIKSA (251 aa). Positions 85 and 248 each coordinate GDP-alpha-D-mannose. Positions 274–421 are hexapeptide repeat domain; sequence LASTKEGGPT…SRSFKNQIIL (148 aa). Residues 357 to 385 are C-loop; sequence TPSDPNPNDPYSKIDSETLFREGKLTPSI.

This sequence belongs to the transferase hexapeptide repeat family. Component of the GMPPA-GMPPB mannose-1-phosphate guanylyltransferase complex composed of 4 gmppa subunits and 8 gmppb subunits; the complex is organized into three layers, a central layer made up of 2 gmppa dimers sandwiched between two layers each made up of 2 gmppb dimers.

Its subcellular location is the cytoplasm. Its function is as follows. Regulatory subunit of the GMPPA-GMPPB mannose-1-phosphate guanylyltransferase complex; reduces the catalytic activity of GMPPB when part of the complex. Mediates allosteric feedback inhibition of GMPPB catalytic activity upon binding GDP-alpha-D-mannose. Together with GMPPB regulates GDP-alpha-D-mannose levels. In Xenopus tropicalis (Western clawed frog), this protein is Mannose-1-phosphate guanylyltransferase regulatory subunit alpha (gmppa).